The chain runs to 929 residues: Band 3 anion transport protein (929 aa).

Methionine 1 is subject to N-acetylmethionine. The Cytoplasmic segment spans residues 1–422 (MGDMRDHEEV…LSDITDALSP (422 aa)). At serine 18 the chain carries Phosphoserine. A phosphotyrosine mark is found at tyrosine 31 and tyrosine 56. A disordered region spans residues 46-67 (ALPTEQTATDYVPSSTSTPHPS). Residues 58-67 (PSSTSTPHPS) show a composition bias toward low complexity. Residues 69-303 (GQVYVELQEL…LGRAAATLMT (235 aa)) are globular. Positions 190–199 (AVLTRSGGAS) are interaction with ANK1. 3 positions are modified to phosphoserine: serine 199, serine 222, and serine 363. A dimerization arm region spans residues 317-370 (REELLRSLESFLDCSLVLPPTDAPSEKALLNLVPVQKELLRRRYLPSPAKPDPN). The segment at 366–389 (KPDPNLYNTLDLNGGKGGPGDEDD) is disordered. Tyrosine 372 is subject to Phosphotyrosine. Threonine 374 carries the post-translational modification Phosphothreonine. Residues 423–446 (QVLAAVIFIYFAALSPAVTFGGLL) traverse the membrane as a helical segment. Over 447 to 454 (GEKTRNLM) the chain is Extracellular. The helical transmembrane segment at 455–475 (GVSELLISTAVQGILFALLGA) threads the bilayer. Residues 476-478 (QPL) are Cytoplasmic-facing. The discontinuously helical transmembrane segment at 479–495 (LVLGFSGPLLVFEEAFF) threads the bilayer. The Extracellular segment spans residues 496–504 (SFCESNNLE). The chain crosses the membrane as a helical span at residues 505–525 (YIVGRAWIGFWLILLVMLVVA). The Cytoplasmic segment spans residues 526–537 (FEGSFLVQYISR). Residues 538-560 (YTQEIFSFLISLIFIYETFSKLI) form a helical membrane-spanning segment. The Extracellular segment spans residues 561–588 (KIFQDYPLQQTYAPVVMKPKPQGPVPNT). Residues 589-609 (ALFSLVLMAGTFLLAMTLRKF) form a helical membrane-spanning segment. Residues 610–620 (KNSTYFPGKLR) are Cytoplasmic-facing. A helical membrane pass occupies residues 621–641 (RVIGDFGVPISILIMVLVDSF). Residues 642–681 (IKGTYTQKLSVPDGLKVSNSSARGWVIHPLGLYRLFPTWM) lie on the Extracellular side of the membrane. Asparagine 660 is a glycosylation site (N-linked (GlcNAc...) asparagine). A helical membrane pass occupies residues 682-702 (MFASVLPALLVFILIFLESQI). At 703-718 (TTLIVSKPERKMIKGS) the chain is on the cytoplasmic side. Residues 719–737 (GFHLDLLLVVGMGGVAALF) traverse the membrane as a helical segment. Residues 738–755 (GMPWLSATTVRSVTHANA) form a discontinuously helical membrane-spanning segment. At 756–778 (LTVMGKASGPGAAAQIQEVKEQR) the chain is on the cytoplasmic side. Transmembrane regions (helical) follow at residues 779-799 (ISGL…PILS) and 800-818 (RIPL…VTSL). The Cytoplasmic portion of the chain corresponds to 819-856 (SGIQLFDRILLLFKPPKYHPDVPFVKRVKTWRMHLFTG). Residues 857 to 887 (IQIICLAVLWVVKSTPASLALPFVLILTVPL) constitute an intramembrane region (discontinuously helical). A lipid anchor (S-palmitoyl cysteine) is attached at cysteine 861. Topologically, residues 888–929 (RRLILPLIFRELELQCLDGDDAKVTFDEENGLDEYDEVPMPV) are cytoplasmic. Tyrosine 922 is modified (phosphotyrosine).

It belongs to the anion exchanger (TC 2.A.31) family. A dimer in solution, but in its membrane environment, it exists primarily as a mixture of dimers and tetramers and spans the membrane asymmetrically. Component of the ankyrin-1 complex in the erythrocyte, composed of ANK1, RHCE, RHAG, SLC4A1, EPB42, GYPA, GYPB and AQP1. Interacts with STOM; this interaction positively regulates SLC4A1 activity. Interacts with GYPA; a GYPA monomer is bound at each end of the SLC4A1 dimer forming a heterotetramer. Three SLC4A1 dimers (Band 3-I, Band 3-II and Band 3-III) participates in the ankyrin-1 complex. Interacts (via the cytoplasmic domain) with EPB42; this interaction is mediated by the SLC4A1 Band 3-I dimer. Interacts (via the cytoplasmic domain) directly with ANK1; this interaction is mediated by the SLC4A1 Band 3-II and Band 3-III dimers. In terms of assembly, interacts with TMEM139. As to expression, detected in erythrocytes (at protein level).

The protein localises to the cell membrane. The protein resides in the basolateral cell membrane. The enzyme catalyses hydrogencarbonate(in) + chloride(out) = hydrogencarbonate(out) + chloride(in). Its function is as follows. Functions both as a transporter that mediates electroneutral anion exchange across the cell membrane and as a structural protein. Component of the ankyrin-1 complex of the erythrocyte membrane; required for normal flexibility and stability of the erythrocyte membrane and for normal erythrocyte shape via the interactions of its cytoplasmic domain with cytoskeletal proteins, glycolytic enzymes, and hemoglobin. Functions as a transporter that mediates the 1:1 exchange of inorganic anions across the erythrocyte membrane. Mediates chloride-bicarbonate exchange in the kidney, and is required for normal acidification of the urine. The chain is Band 3 anion transport protein from Mus musculus (Mouse).